Consider the following 134-residue polypeptide: Large-conductance mechanosensitive channel (134 aa).

A run of 2 helical transmembrane segments spans residues 16–36 (VIDL…VTAL) and 81–101 (GDFI…FIVV).

This sequence belongs to the MscL family. Homopentamer.

Its subcellular location is the cell inner membrane. Channel that opens in response to stretch forces in the membrane lipid bilayer. May participate in the regulation of osmotic pressure changes within the cell. The sequence is that of Large-conductance mechanosensitive channel from Stenotrophomonas maltophilia (strain K279a).